A 731-amino-acid chain; its full sequence is Two pore channel protein 2 (731 aa).

Residues 1–68 (MAAEEQPLLG…RWYYSNVCQR (68 aa)) are Cytoplasmic-facing. Residues 69–89 (VLGFIIFLILILAFVEVPSSF) form a helical membrane-spanning segment. Residues 90–111 (TKTADVRYRSQPWQPPCGLTET) are Extracellular-facing. The chain crosses the membrane as a helical span at residues 112-132 (IEAFCLLAFLVDLSVKGYLVG). Residues 133–139 (QAQLQQN) lie on the Cytoplasmic side of the membrane. Residues 140-160 (LWLLAYFMVLVVSVVDWIVSL) form a helical membrane-spanning segment. Residues 161–167 (SLACEEP) lie on the Extracellular side of the membrane. A helical membrane pass occupies residues 168-188 (LRMRRLLRPFFLLQNSSMMKK). Residues 187 to 191 (KKTLK) form an interaction with phosphatidylinositol 3,5-bisphosphate region. Residues 189 to 203 (TLKCIRWSLPEMASV) are Cytoplasmic-facing. Residues 204-224 (GLLLAIHLCLFTIIGMLLFTI) traverse the membrane as a helical segment. The Extracellular segment spans residues 225 to 238 (GEKDEAQDQERLAY). Residues 239 to 263 (FRNLPEALTSLLVLLTTSNNPDVMI) constitute an intramembrane region (helical; Pore-forming). Residues 264 to 270 (PAYTQNR) lie on the Extracellular side of the membrane. The chain crosses the membrane as a helical span at residues 271-291 (AFALFFIVFTLIGSLFLMNLL). Residues 292-417 (TAIIYNQFRG…TAQFIFSHHY (126 aa)) lie on the Cytoplasmic side of the membrane. The helical transmembrane segment at 418-438 (FDYLGNLVALGNLLSICVFLV) threads the bilayer. Residues 439-449 (LDSDLLPGERD) lie on the Extracellular side of the membrane. Residues 450–470 (DFVLGILDYIFILYYLLELLF) traverse the membrane as a helical segment. Topologically, residues 471–486 (KVFALGLPGYLSYHSN) are cytoplasmic. The helical transmembrane segment at 487–507 (VFDGLLTIILLVSEICTLAVY) threads the bilayer. Topologically, residues 508–524 (RLPHSGWKPEQYGPLSL) are extracellular. Residues 525–542 (WDMTRLMNTLIVFRFLRI) form a helical membrane-spanning segment. The Cytoplasmic segment spans residues 543–564 (IPNIKPMAEVANTILGLIPNLR). A helical transmembrane segment spans residues 565–585 (AFGGILVVAYYVFAMIGINLF). At 586–618 (RGVIVPPGNSSLVPDNNSAVCGSFEQLGYWPNN) the chain is on the extracellular side. N-linked (GlcNAc...) asparagine glycosylation is found at asparagine 594 and asparagine 601. An intramembrane region (helical; Pore-forming) is located at residues 619–641 (FDDFAAALITLWNVMVVNNWQVI). Over 642–656 (LEAYKRYAGPWSMVY) the chain is Extracellular. Residues 657 to 677 (FVLWWLVSSVIWINLFLALLL) form a helical membrane-spanning segment. Residues 678 to 731 (ENFLHRWDPQGHKQLLVGTKQMSVELMFRDILEEPKEEELMEKLHKHPHLHLCR) lie on the Cytoplasmic side of the membrane.

It belongs to the calcium channel alpha-1 subunit (TC 1.A.1.11) family. Two pore calcium channel subfamily. In terms of assembly, homodimer. Interacts with LRRK2. Interacts with HAX1. Interacts with MTOR; the interaction is required for TPCN2 ATP sensitivity. Found in a complex with LSM12, TPCN1 and TPCN2. Interacts with LSM12. N-glycosylated. As to expression, widely expressed. Highly expressed in macrophages. Expressed in pigmented cells.

The protein localises to the late endosome membrane. It is found in the lysosome membrane. Its subcellular location is the melanosome membrane. It carries out the reaction Ca(2+)(in) = Ca(2+)(out). The enzyme catalyses Na(+)(in) = Na(+)(out). Its activity is regulated as follows. Regulated by Mg(2+) ions, cytosolic Mg(2+) selectively inhibits outward current while lysosomal Mg(2+) modestly inhibits both the outward and inward currents. In the absence of Mg(2+), NAADP readily activates TPCN2, with properties similar to PI(3,5)P2. Na(+) current is inhibited by ATP in a MTORC-dependent manner. ATP sensitivity is independent of PI(3,5)P2. Both current elicited by PI(3,5)P2 as well as NAADP are inhibited by tetrandrine. Its function is as follows. Intracellular channel initially characterized as a non-selective Ca(2+)-permeable channel activated by NAADP (nicotinic acid adenine dinucleotide phosphate), it is also a highly-selective Na(+) channel activated directly by PI(3,5)P2 (phosphatidylinositol 3,5-bisphosphate). Localizes to the lysosomal and late endosome membranes where it regulates organellar membrane excitability, membrane trafficking, and pH homeostasis. Is associated with a plethora of physiological processes, including mTOR-dependent nutrient sensing, skin pigmentation and autophagy. Ion selectivity is not fixed but rather agonist-dependent and under defined ionic conditions, can be readily activated by both NAADP and PI(3,5)P2. As calcium channel, it increases the pH in the lysosomal lumen, as sodium channel, it promotes lysosomal exocytosis. Plays a crucial role in endolysosomal trafficking in the endolysosomal degradation pathway and is potentially involved in the homeostatic control of many macromolecules and cell metabolites. Also expressed in melanosomes of pigmented cells where mediates a Ca(2+) channel and/or PI(3,5)P2-activated melanosomal Na(+) channel to acidify pH and inhibit tyrosinase activity required for melanogenesis and pigmentation. Unlike the voltage-dependent TPCN1, TPCN2 is voltage independent and can be activated solely by PI(3,5)P2 binding. In contrast, PI(4,5)P2, PI(3,4)P2, PI(3)P and PI(5)P have no obvious effect on channel activation. (Microbial infection) During Ebola virus (EBOV) infection, controls the movement of endosomes containing virus particles and is required by EBOV to escape from the endosomal network into the cell cytoplasm. This chain is Two pore channel protein 2, found in Mus musculus (Mouse).